A 68-amino-acid chain; its full sequence is Protein RH1 (68 aa).

In Pantherophis guttatus (Corn snake), this protein is Protein RH1.